The following is a 374-amino-acid chain: MKPKVRFFDLQPYGDKFVVRDPVGISQPFIATPELLFLLSLMDGTRDITDLQAEFFKKTGHLIPKEEINQVINFLDENYLLYNERFLNKLKEEREKILKKGYREPSHAGQAYPENPQELKNFIEETVNKNSEKFKARGILVPHMDLRVASGVYGSVYSAIKENEYDTVVLLGVSHYFHETPFSVLPLDLRTPLGDLKVDIERVEELQKMFDYDLSHDVLAYKNEHSIEFQTIFLKYLFPEVKVIPAIVSYGDTKSLKEIAHKITKVLEDSQNPLIISSVDFSHVGRKFGDPHSYDPSPRDREYINLLAELKNEEAFNLLQSDNNRTRIDGQFTNFVFLEILKNLGVKEGKLLDYDVYHEAPTDSKVSYAGMVFY.

This sequence belongs to the MEMO1 family.

This is MEMO1 family protein aq_1336 from Aquifex aeolicus (strain VF5).